The following is a 235-amino-acid chain: Probable inactive serine protease 37 (235 aa).

The N-terminal stretch at 1–19 (MKFTFCLTVLAGTFFSAHS) is a signal peptide. The region spanning 20–233 (SVQKDDPSPY…YVSWIESTTK (214 aa)) is the Peptidase S1 domain. Cystine bridges form between C40-C56, C131-C198, and C163-C177.

This sequence belongs to the peptidase S1 family.

It localises to the cytoplasmic vesicle. Its subcellular location is the secretory vesicle. The protein localises to the acrosome. It is found in the secreted. Its function is as follows. Plays a role in male fertility. May have a role in sperm migration or binding to zona-intact eggs. Involved in the activation of the proacrosin/acrosin system. The polypeptide is Probable inactive serine protease 37 (Bos taurus (Bovine)).